Reading from the N-terminus, the 333-residue chain is 1,5-anhydro-D-fructose reductase (333 aa).

NADP(+) contacts are provided by residues 9-12 (ASTI), 33-34 (SS), Arg-38, 71-76 (TTNELH), 93-94 (EK), Asn-120, 162-163 (WR), and Tyr-283.

Belongs to the Gfo/Idh/MocA family. As to quaternary structure, monomer.

The enzyme catalyses 1,5-anhydro-D-mannitol + NADP(+) = 1,5-anhydro-D-fructose + NADPH + H(+). Functionally, catalyzes the NADPH-specific reduction of 1,5-anhydro-D-fructose to 1,5-anhydro-D-mannitol. This is 1,5-anhydro-D-fructose reductase (afr) from Rhizobium meliloti (strain 1021) (Ensifer meliloti).